A 326-amino-acid polypeptide reads, in one-letter code: H-2 class I histocompatibility antigen, Q8 alpha chain (326 aa).

The first 21 residues, 1 to 21 (MALTMLLLLVAAALTLIETRA), serve as a signal peptide directing secretion. The alpha-1 stretch occupies residues 22–111 (GPHSLRYFHT…AQRYYNQSKG (90 aa)). Residues 22 to 305 (GPHSLRYFHT…EPPPSTVSNM (284 aa)) are Extracellular-facing. An N-linked (GlcNAc...) asparagine glycan is attached at Asn107. The segment at 112–203 (GSHTLQWMYG…QLRKETLLCT (92 aa)) is alpha-2. Intrachain disulfides connect Cys122–Cys185 and Cys224–Cys280. Residues 204 to 295 (DPPKAHVTHH…GLPEPLTLRW (92 aa)) are alpha-3. The region spanning 206–294 (PKAHVTHHPR…EGLPEPLTLR (89 aa)) is the Ig-like C1-type domain. Asn277 carries an N-linked (GlcNAc...) asparagine glycan. The tract at residues 296-305 (EPPPSTVSNM) is connecting peptide. A helical membrane pass occupies residues 306 to 326 (ANVAILVVLVAWPSLELWWIL).

Belongs to the MHC class I family. In terms of assembly, heterodimer of an alpha chain and a beta chain (beta-2-microglobulin).

It is found in the membrane. In terms of biological role, involved in the presentation of foreign antigens to the immune system. In Mus musculus (Mouse), this protein is H-2 class I histocompatibility antigen, Q8 alpha chain (H2-Q8).